The sequence spans 239 residues: Prolyl hydroxylase EGLN3 (239 aa).

Positions 62–73 are beta(2)beta(3) 'finger-like' loop; the sequence is AGPRAGVSKRHL. The required for interaction with ADRB2 stretch occupies residues 88–104; that stretch reads CEAISFLLSLIDRLVLY. One can recognise a Fe2OG dioxygenase domain in the interval 116–214; the sequence is ERSKAMVACY…RYAMTVWYFD (99 aa). Fe cation contacts are provided by histidine 135, aspartate 137, and histidine 196. A 2-oxoglutarate-binding site is contributed by arginine 205.

As to quaternary structure, interacts with BCL2 (via its BH4 domain); the interaction disrupts the BAX-BCL4 complex inhibiting the anti-apoptotic activity of BCL2. Interacts with WDR83; the interaction leads to almost complete elimination of HIF-mediated reporter activity. Interacts with ADRB2; the interaction hydroxylates ADRB2 facilitating its ubiquitination by the VHL-E3 ligase complex. Interacts with PAX2; the interaction targets PAX2 for destruction. Interacts with PKM; the interaction hydroxylates PKM in hypoxia. Interacts with LIMD1, WTIP and AJUBA. The cofactor is Fe(2+). Requires L-ascorbate as cofactor. In terms of processing, ubiquitinated by SIAH1 and/or SIAH2 in response to the unfolded protein response (UPR), leading to its degradation. In terms of tissue distribution, widely expressed at low levels. Expressed at higher levels in adult heart (cardiac myocytes, aortic endothelial cells and coronary artery smooth muscle), lung and placenta, and in fetal spleen, heart and skeletal muscle. Also expressed in pancreas. Localized to pancreatic acini and islet cells.

It is found in the nucleus. It localises to the cytoplasm. The enzyme catalyses L-prolyl-[protein] + 2-oxoglutarate + O2 = trans-4-hydroxy-L-prolyl-[protein] + succinate + CO2. The catalysed reaction is L-prolyl-[hypoxia-inducible factor alpha subunit] + 2-oxoglutarate + O2 = trans-4-hydroxy-L-prolyl-[hypoxia-inducible factor alpha subunit] + succinate + CO2. With respect to regulation, activated in cardiovascular cells and Hela cells following exposure to hypoxia. Inhibited by polynitrogen compounds probably by chelation to Fe(2+) ions. Prolyl hydroxylase that mediates hydroxylation of proline residues in target proteins, such as PKM, TELO2, ATF4 and HIF1A. Target proteins are preferentially recognized via a LXXLAP motif. Cellular oxygen sensor that catalyzes, under normoxic conditions, the post-translational formation of 4-hydroxyproline in hypoxia-inducible factor (HIF) alpha proteins. Hydroxylates a specific proline found in each of the oxygen-dependent degradation (ODD) domains (N-terminal, NODD, and C-terminal, CODD) of HIF1A. Also hydroxylates HIF2A. Has a preference for the CODD site for both HIF1A and HIF2A. Hydroxylation on the NODD site by EGLN3 appears to require prior hydroxylation on the CODD site. Hydroxylated HIFs are then targeted for proteasomal degradation via the von Hippel-Lindau ubiquitination complex. Under hypoxic conditions, the hydroxylation reaction is attenuated allowing HIFs to escape degradation resulting in their translocation to the nucleus, heterodimerization with HIF1B, and increased expression of hypoxy-inducible genes. ELGN3 is the most important isozyme in limiting physiological activation of HIFs (particularly HIF2A) in hypoxia. Also hydroxylates PKM in hypoxia, limiting glycolysis. Under normoxia, hydroxylates and regulates the stability of ADRB2. Regulator of cardiomyocyte and neuronal apoptosis. In cardiomyocytes, inhibits the anti-apoptotic effect of BCL2 by disrupting the BAX-BCL2 complex. In neurons, has a NGF-induced proapoptotic effect, probably through regulating CASP3 activity. Also essential for hypoxic regulation of neutrophilic inflammation. Plays a crucial role in DNA damage response (DDR) by hydroxylating TELO2, promoting its interaction with ATR which is required for activation of the ATR/CHK1/p53 pathway. Also mediates hydroxylation of ATF4, leading to decreased protein stability of ATF4. This is Prolyl hydroxylase EGLN3 from Homo sapiens (Human).